Consider the following 199-residue polypeptide: Ribonuclease HII (199 aa).

In terms of domain architecture, RNase H type-2 spans 11 to 199 (SRVAGVDEVG…RRSFLRRLLG (189 aa)). Aspartate 17, glutamate 18, and aspartate 113 together coordinate a divalent metal cation.

The protein belongs to the RNase HII family. Mn(2+) is required as a cofactor. Mg(2+) serves as cofactor.

It is found in the cytoplasm. The enzyme catalyses Endonucleolytic cleavage to 5'-phosphomonoester.. In terms of biological role, endonuclease that specifically degrades the RNA of RNA-DNA hybrids. This Synechococcus sp. (strain CC9902) protein is Ribonuclease HII.